The following is a 366-amino-acid chain: Zinc-regulated GTPase metalloprotein activator 1 (366 aa).

A psi-PxLVp motif motif is present at residues 5–12 (DECPELVP). 31–38 (GYLGAGKT) is a binding site for GTP. Zn(2+) contacts are provided by C89, C91, and C92. The short motif at 89–92 (CLCC) is the CXCC motif element. GTP is bound by residues 92–96 (CSVKD) and 185–188 (NKTD). Residues 258 to 357 (TITFEVPGSV…GEILKKEFIS (100 aa)) form the CobW C-terminal domain.

It belongs to the SIMIBI class G3E GTPase family. ZNG1 subfamily.

It localises to the nucleus. The enzyme catalyses GTP + H2O = GDP + phosphate + H(+). In terms of biological role, zinc chaperone that directly transfers zinc cofactor to target metalloproteins, thereby activating them. Catalyzes zinc insertion into the active site of methionine aminopeptidase METAP1, which function to cleave the initiator methionine from polypeptides during or after protein translation. Mechanistically, the N-terminal psi-PxLVp motif binds to the C6H2-type zinc finger of inactive form of METAP1. After formation of the docked complex, zinc is transferred from the CXCC motif in the GTPase domain of ZNG1 to the zinc binding site in the peptidase domain of METAP1 in a process requiring GTP hydrolysis. GTP/GDP exchange is required for release of active METAP1. The polypeptide is Zinc-regulated GTPase metalloprotein activator 1 (Danio rerio (Zebrafish)).